The chain runs to 969 residues: Isoleucine--tRNA ligase (969 aa).

Positions 68–78 (PYANGALHMGH) match the 'HIGH' region motif. L-isoleucyl-5'-AMP is bound at residue E585. The short motif at 626–630 (KMSKS) is the 'KMSKS' region element. An ATP-binding site is contributed by K629. Zn(2+) is bound by residues C939, C942, C959, and C962.

This sequence belongs to the class-I aminoacyl-tRNA synthetase family. IleS type 1 subfamily. In terms of assembly, monomer. It depends on Zn(2+) as a cofactor.

It localises to the cytoplasm. It carries out the reaction tRNA(Ile) + L-isoleucine + ATP = L-isoleucyl-tRNA(Ile) + AMP + diphosphate. In terms of biological role, catalyzes the attachment of isoleucine to tRNA(Ile). As IleRS can inadvertently accommodate and process structurally similar amino acids such as valine, to avoid such errors it has two additional distinct tRNA(Ile)-dependent editing activities. One activity is designated as 'pretransfer' editing and involves the hydrolysis of activated Val-AMP. The other activity is designated 'posttransfer' editing and involves deacylation of mischarged Val-tRNA(Ile). In Prochlorococcus marinus (strain MIT 9211), this protein is Isoleucine--tRNA ligase.